A 249-amino-acid chain; its full sequence is Phosphate import ATP-binding protein PstB 2 (249 aa).

Residues 4-244 (FEVTHLNLFY…PKDHRTQGYV (241 aa)) enclose the ABC transporter domain. 36-43 (GPSGCGKS) provides a ligand contact to ATP.

Belongs to the ABC transporter superfamily. Phosphate importer (TC 3.A.1.7) family. In terms of assembly, the complex is composed of two ATP-binding proteins (PstB), two transmembrane proteins (PstC and PstA) and a solute-binding protein (PstS).

The protein resides in the cell inner membrane. It carries out the reaction phosphate(out) + ATP + H2O = ADP + 2 phosphate(in) + H(+). Its function is as follows. Part of the ABC transporter complex PstSACB involved in phosphate import. Responsible for energy coupling to the transport system. This chain is Phosphate import ATP-binding protein PstB 2, found in Shewanella oneidensis (strain ATCC 700550 / JCM 31522 / CIP 106686 / LMG 19005 / NCIMB 14063 / MR-1).